The chain runs to 314 residues: Malate dehydrogenase (314 aa).

NAD(+) is bound by residues 11-16 (GSGNIG) and D35. Residues R84 and R90 each contribute to the substrate site. NAD(+) is bound by residues N97 and 120–122 (ITN). Residues N122 and R153 each contribute to the substrate site. Residue H177 is the Proton acceptor of the active site.

It belongs to the LDH/MDH superfamily. MDH type 3 family.

The enzyme catalyses (S)-malate + NAD(+) = oxaloacetate + NADH + H(+). Catalyzes the reversible oxidation of malate to oxaloacetate. This chain is Malate dehydrogenase, found in Rickettsia felis (strain ATCC VR-1525 / URRWXCal2) (Rickettsia azadi).